The primary structure comprises 276 residues: uncharacterized protein (276 aa).

The segment at 1–20 is disordered; that stretch reads MMSDEQHQGGDGQTTTNTNT.

This is an uncharacterized protein from Dictyostelium discoideum (Social amoeba).